Consider the following 426-residue polypeptide: Glutamate-1-semialdehyde 2,1-aminomutase (426 aa).

An N6-(pyridoxal phosphate)lysine modification is found at Lys266.

Belongs to the class-III pyridoxal-phosphate-dependent aminotransferase family. HemL subfamily. Pyridoxal 5'-phosphate serves as cofactor.

Its subcellular location is the cytoplasm. The catalysed reaction is (S)-4-amino-5-oxopentanoate = 5-aminolevulinate. It participates in porphyrin-containing compound metabolism; protoporphyrin-IX biosynthesis; 5-aminolevulinate from L-glutamyl-tRNA(Glu): step 2/2. The sequence is that of Glutamate-1-semialdehyde 2,1-aminomutase (hemL) from Methanocaldococcus jannaschii (strain ATCC 43067 / DSM 2661 / JAL-1 / JCM 10045 / NBRC 100440) (Methanococcus jannaschii).